The chain runs to 112 residues: ATP synthase subunit c (112 aa).

Transmembrane regions (helical) follow at residues 36–56 (FSVL…AIGM) and 81–101 (MFIA…IALI).

It belongs to the ATPase C chain family. In terms of assembly, F-type ATPases have 2 components, F(1) - the catalytic core - and F(0) - the membrane proton channel. F(1) has five subunits: alpha(3), beta(3), gamma(1), delta(1), epsilon(1). F(0) has three main subunits: a(1), b(2) and c(10-14). The alpha and beta chains form an alternating ring which encloses part of the gamma chain. F(1) is attached to F(0) by a central stalk formed by the gamma and epsilon chains, while a peripheral stalk is formed by the delta and b chains.

Its subcellular location is the cell inner membrane. Its function is as follows. F(1)F(0) ATP synthase produces ATP from ADP in the presence of a proton or sodium gradient. F-type ATPases consist of two structural domains, F(1) containing the extramembraneous catalytic core and F(0) containing the membrane proton channel, linked together by a central stalk and a peripheral stalk. During catalysis, ATP synthesis in the catalytic domain of F(1) is coupled via a rotary mechanism of the central stalk subunits to proton translocation. Functionally, key component of the F(0) channel; it plays a direct role in translocation across the membrane. A homomeric c-ring of between 10-14 subunits forms the central stalk rotor element with the F(1) delta and epsilon subunits. The polypeptide is ATP synthase subunit c (Campylobacter jejuni subsp. doylei (strain ATCC BAA-1458 / RM4099 / 269.97)).